Here is a 319-residue protein sequence, read N- to C-terminus: Myoblast determination protein 1 (319 aa).

A Peptide (Met-Gly) (interchain with G-Cter in ubiquitin) cross-link involves residue M1. An N6-methyllysine; by EHMT2 modification is found at K104. In terms of domain architecture, bHLH spans 109-160 (DRRKAATMRERRRLSKVNEAFETLKRCTSSNPNQRLPKVEILRNAIRYIEGL). Disordered stretches follow at residues 174–221 (AAAA…SGAR) and 266–319 (APAL…YQVL). 2 stretches are compositionally biased toward polar residues: residues 197–207 (SDASSPRSNCS) and 308–319 (ASANPNPIYQVL).

In terms of assembly, efficient DNA binding requires dimerization with another bHLH protein. Seems to form active heterodimers with ITF-2. Interacts with SUV39H1. Interacts with DDX5. Interacts with CHD2. Interacts with TSC22D3. Interacts with SETD3. Interacts with P-TEFB complex; promotes the transcriptional activity of MYOD1 through its CDK9-mediated phosphorylation. Interacts with CSRP3. Interacts with NUPR1. In terms of processing, phosphorylated by CDK9. This phosphorylation promotes its function in muscle differentiation. Acetylated by a complex containing EP300 and PCAF. The acetylation is essential to activate target genes. Conversely, its deacetylation by SIRT1 inhibits its function. Post-translationally, ubiquitinated on the N-terminus; which is required for proteasomal degradation. In terms of processing, methylation at Lys-104 by EHMT2/G9a inhibits myogenic activity.

Its subcellular location is the nucleus. In terms of biological role, acts as a transcriptional activator that promotes transcription of muscle-specific target genes and plays a role in muscle differentiation. Together with MYF5 and MYOG, co-occupies muscle-specific gene promoter core region during myogenesis. Induces fibroblasts to differentiate into myoblasts. Interacts with and is inhibited by the twist protein. This interaction probably involves the basic domains of both proteins. The polypeptide is Myoblast determination protein 1 (MYOD1) (Sus scrofa (Pig)).